The chain runs to 204 residues: Urease accessory protein UreG (204 aa).

12 to 19 (GPVGSGKT) serves as a coordination point for GTP.

Belongs to the SIMIBI class G3E GTPase family. UreG subfamily. In terms of assembly, homodimer. UreD, UreF and UreG form a complex that acts as a GTP-hydrolysis-dependent molecular chaperone, activating the urease apoprotein by helping to assemble the nickel containing metallocenter of UreC. The UreE protein probably delivers the nickel.

The protein resides in the cytoplasm. Functionally, facilitates the functional incorporation of the urease nickel metallocenter. This process requires GTP hydrolysis, probably effectuated by UreG. The chain is Urease accessory protein UreG from Stutzerimonas stutzeri (strain A1501) (Pseudomonas stutzeri).